An 82-amino-acid polypeptide reads, in one-letter code: UPF0298 protein SPCG_0698 (82 aa).

Belongs to the UPF0298 family.

It is found in the cytoplasm. The chain is UPF0298 protein SPCG_0698 from Streptococcus pneumoniae (strain CGSP14).